Reading from the N-terminus, the 674-residue chain is MAASSLPSHNSKFEPKLERAQIAWSEEGVPTSTMFDDVYYSKLDGLAEVNYIFLKHNQLPERFETLLPNSRFCILETGFGAGLNFLTTCLLWLEKSPADAQLHFISLEKFPLTRSELAKAHHAFEEVSEPSNALLDVYPLHLPGWHDVFLYDQRIRLTLWFGHVMKGLPEFDVQVDAWFLDGFTPRKNPDMWQSELYLQMARLSNEATTFATFTAAGDVRRGLAQYGFEVEKAPGYAQKREMCFGRYAHSRPFSSKAPWFERAKGGHPSPKKAIVIGAGLAGATVAYQLASQGLSVTVLEQEKAVAQQASGNLAGAIHPLVTADWNVRSQFYLKGFECSLRWLRPWFDSHSIVGQQNGLMQLAMTETMLQRLQEALTRVGLPKSFAYWCDADQASDLIGQKTDHEGLFFPEAGWVQPTSVVTQCLAHEAIALKQEEAVVSIQPVPDQNSQDWQIMTPNSTYQADVVVVATGALNGDLNEQLNLPIRPVKGQVSHFKAADLKGALKTTVTHRGYSVCGDFGAQSPYAAISGATFEAPDLSPILSDASHIENQRLATEALPNWLADSTDMAGKVGFRPTTPDHLPLIGAVPDFEWMKTAYFEQSHTHAVYRYAEQRYQPGLYVSNGHGARGLMSVFLAAEMIGAMVTGDAQVMPKSLYHAVHPARFAIRHWRSGKR.

The segment at 1-248 is tRNA (mnm(5)s(2)U34)-methyltransferase; sequence MAASSLPSHN…KREMCFGRYA (248 aa). Residues 276-674 form an FAD-dependent cmnm(5)s(2)U34 oxidoreductase region; sequence IGAGLAGATV…AIRHWRSGKR (399 aa).

The protein in the N-terminal section; belongs to the methyltransferase superfamily. tRNA (mnm(5)s(2)U34)-methyltransferase family. This sequence in the C-terminal section; belongs to the DAO family. FAD serves as cofactor.

It is found in the cytoplasm. The enzyme catalyses 5-aminomethyl-2-thiouridine(34) in tRNA + S-adenosyl-L-methionine = 5-methylaminomethyl-2-thiouridine(34) in tRNA + S-adenosyl-L-homocysteine + H(+). Functionally, catalyzes the last two steps in the biosynthesis of 5-methylaminomethyl-2-thiouridine (mnm(5)s(2)U) at the wobble position (U34) in tRNA. Catalyzes the FAD-dependent demodification of cmnm(5)s(2)U34 to nm(5)s(2)U34, followed by the transfer of a methyl group from S-adenosyl-L-methionine to nm(5)s(2)U34, to form mnm(5)s(2)U34. In Hydrogenovibrio crunogenus (strain DSM 25203 / XCL-2) (Thiomicrospira crunogena), this protein is tRNA 5-methylaminomethyl-2-thiouridine biosynthesis bifunctional protein MnmC.